The primary structure comprises 346 residues: KH domain-containing, RNA-binding, signal transduction-associated protein 3 (346 aa).

Residues 1–160 (MEEKYLPELM…IKKFLIPDYN (160 aa)) are involved in homodimerization. Lysine 4 is covalently cross-linked (Glycyl lysine isopeptide (Lys-Gly) (interchain with G-Cter in SUMO2)). The KH domain occupies 61-127 (LIPVKQFPKF…AKYFHLNDDL (67 aa)). Residues 212-251 (RPVGVVVPRGTPTPRGVLSTRGPVSRGRGLLTPRARGVPP) are interaction with SIAH1. The span at 213-228 (PVGVVVPRGTPTPRGV) shows a compositional bias: low complexity. 2 disordered regions span residues 213-267 (PVGV…ETYG) and 318-346 (QEEW…YGRY). The segment covering 253 to 262 (GYRPPPPPPT) has biased composition (pro residues).

This sequence belongs to the KHDRBS family. Self-associates to form homooligomers; dimerization increases RNA affinity. Interacts with KHDRBS2/SLM-1. Interacts with KHDRBS1/SAM68; heterooligomer formation of KHDRBS family proteins may modulate RNA substrate specificity. Interacts with the splicing regulatory proteins SFRS9, SAFB and YTHDC1. Interacts with HNRPL. Interacts with RBMX, RBMY1A1, p85 subunit of PI3-kinase, SERPINB5. Interacts with SIAH1 which promotes targeting for degradation. Post-translationally, phosphorylated on tyrosine residues. Isoform 1 C-terminal region is tyrosine-rich, but isoform 2 lacking this C-terminal region is also tyrosine-phosphorylated. In terms of tissue distribution, ubiquitous with higher expression in testis, skeletal muscle and brain. Expressed in the kidney only in podocytes, the glomerular epithelial cells of the kidney. Strongly expressed after meiosis.

It localises to the nucleus. Functionally, RNA-binding protein that plays a role in the regulation of alternative splicing and influences mRNA splice site selection and exon inclusion. Binds preferentially to the 5'-[AU]UAAA-3' motif in vitro. Binds optimally to RNA containing 5'-[AU]UAA-3' as a bipartite motif spaced by more than 15 nucleotides. Binds poly(A). RNA-binding abilities are down-regulated by tyrosine kinase PTK6. Involved in splice site selection of vascular endothelial growth factor. In vitro regulates CD44 alternative splicing by direct binding to purine-rich exonic enhancer. Can regulate alternative splicing of neurexins NRXN1-3 in the laminin G-like domain 6 containing the evolutionary conserved neurexin alternative spliced segment 4 (AS4) involved in neurexin selective targeting to postsynaptic partners such as neuroligins and LRRTM family members. Targeted, cell-type specific splicing regulation of NRXN1 at AS4 is involved in neuronal glutamatergic synapse function and plasticity. May regulate expression of KHDRBS2/SLIM-1 in defined brain neuron populations by modifying its alternative splicing. Can bind FABP9 mRNA. May play a role as a negative regulator of cell growth. Inhibits cell proliferation. Its function is as follows. (Microbial infection) Involved in post-transcriptional regulation of HIV-1 gene expression. The protein is KH domain-containing, RNA-binding, signal transduction-associated protein 3 (KHDRBS3) of Homo sapiens (Human).